A 144-amino-acid polypeptide reads, in one-letter code: 3-dehydroquinate dehydratase (144 aa).

Catalysis depends on Tyr23, which acts as the Proton acceptor. 3 residues coordinate substrate: Asn74, His80, and Asp87. The active-site Proton donor is the His101. Substrate is bound by residues 102–103 (LS) and Arg112.

It belongs to the type-II 3-dehydroquinase family. Homododecamer.

It carries out the reaction 3-dehydroquinate = 3-dehydroshikimate + H2O. It participates in metabolic intermediate biosynthesis; chorismate biosynthesis; chorismate from D-erythrose 4-phosphate and phosphoenolpyruvate: step 3/7. Functionally, catalyzes a trans-dehydration via an enolate intermediate. This Mesorhizobium japonicum (strain LMG 29417 / CECT 9101 / MAFF 303099) (Mesorhizobium loti (strain MAFF 303099)) protein is 3-dehydroquinate dehydratase.